A 614-amino-acid polypeptide reads, in one-letter code: MMQVLLVTICLAVFPYQGSSIILESGNVNDYEVVYPQKITALPKGAIQQPEQKYEDAIKYEFKVNGKPVVLHLEKNKGLFSEDYSETHYTPDGREITINPPVEDHCYYHGRIQNDADSTASISACNGLKGHFKLQGEMYLIEPLRIPDSEAHAIYKYENIEKEDEAPKMCGVTQTNWESDEPIKASQLNLTPEQRTYLKSKKYVELVIVADYIMFWKYDRSLSTIRTRIYEIVNTLNVIYRFLNIYIALVAVEIWSKGDLINVTSSAYDTLDSFGEWRERDLLNRKRHDNAQLLTGINFNGPSAGRGFVGRMCQPKYSVGIVQDHSKIYLLVASAMAHEMGHNLGMDHDRIDCTCGAKSCIMSGILRCETSYLFSDCSREEHRKYLINKMPQCILNKPLKTDIVSPAVCGNYFVEVGEECDCGSPANCQDRCCDAATCKLRPGAQCGDGVCCYQCKFRRAGTVCRPANGECDVSDLCTGQSAECPTDQFQRNGQPCQNNKGYCYNGTCPIMEKQCISLFGASATVAQDSCFQFNRRGNHYGYCRKENNTKIACAPEDVKCGRLYCLDNSSGHKNPCQIYYIPSDENKGMVDPGTKCGDGMVCSNGKCVDVTIAY.

Positions 1 to 20 (MMQVLLVTICLAVFPYQGSS) are cleaved as a signal peptide. Positions 21 to 193 (IILESGNVND…KASQLNLTPE (173 aa)) are excised as a propeptide. Glutamine 194 bears the Pyrrolidone carboxylic acid mark. In terms of domain architecture, Peptidase M12B spans 202–398 (KYVELVIVAD…KMPQCILNKP (197 aa)). Glutamate 205 serves as a coordination point for Ca(2+). N-linked (GlcNAc...) asparagine glycosylation is present at asparagine 262. Ca(2+) is bound at residue aspartate 289. Intrachain disulfides connect cysteine 313-cysteine 393, cysteine 353-cysteine 377, and cysteine 355-cysteine 360. Histidine 338 lines the Zn(2+) pocket. Glutamate 339 is a catalytic residue. Residues histidine 342 and histidine 348 each contribute to the Zn(2+) site. 8 residues coordinate Ca(2+): cysteine 393, asparagine 396, valine 408, asparagine 411, phenylalanine 413, glutamate 415, glutamate 418, and aspartate 421. The Disintegrin domain occupies 406 to 492 (PAVCGNYFVE…ECPTDQFQRN (87 aa)). 14 disulfide bridges follow: cysteine 409-cysteine 438, cysteine 420-cysteine 433, cysteine 422-cysteine 428, cysteine 432-cysteine 455, cysteine 446-cysteine 452, cysteine 451-cysteine 477, cysteine 464-cysteine 484, cysteine 471-cysteine 503, cysteine 496-cysteine 508, cysteine 515-cysteine 565, cysteine 530-cysteine 576, cysteine 543-cysteine 553, cysteine 560-cysteine 602, and cysteine 596-cysteine 607. The D/ECD-tripeptide signature appears at 470-472 (ECD). Asparagine 505, asparagine 547, and asparagine 568 each carry an N-linked (GlcNAc...) asparagine glycan.

It belongs to the venom metalloproteinase (M12B) family. P-III subfamily. P-IIIc sub-subfamily. Heterodimer; disulfide-linked. It depends on Zn(2+) as a cofactor. The N-terminus is blocked. As to expression, expressed by the venom gland.

It is found in the secreted. With respect to regulation, inhibited by EDTA or 1,10-phenanthroline. Not inhibited by PMSF. Functionally, this metalloproteinase hydrolyzes azocasein, and insulin B-chain (at the '38-Ala-|-Leu-39' bond). Also hydrolyzes the Aalpha-chain (FGA) and more slowly the Bbeta-chain of fibrinogen (FGB), without affecting the gamma-chain. Cleaves alpha-chain of fibrinogen at '432-Lys-|-Leu-433' and '535-Pro-|-Met-536' bonds. Does not cleave fibrin. Inhibits endothelial cell adhesion to extracellular matrix proteins such as fibrinogen, fibronectin, vitronectin, collagen I, and collagen IV. Induces apoptosis in vascular endothelial cells. This Macrovipera lebetinus (Levantine viper) protein is Zinc metalloproteinase-disintegrin-like VLAIP-B.